Consider the following 248-residue polypeptide: DNA repair protein RecO (248 aa).

This sequence belongs to the RecO family.

Functionally, involved in DNA repair and RecF pathway recombination. The protein is DNA repair protein RecO of Bacillus cytotoxicus (strain DSM 22905 / CIP 110041 / 391-98 / NVH 391-98).